Here is a 194-residue protein sequence, read N- to C-terminus: Lytic chitin monooxygenase (194 aa).

The signal sequence occupies residues 1–28 (MKKSLLTIVLAFSFVLGGAALAPTVSEA). 2 residues coordinate Cu cation: His29 and His114. Residues 29-191 (HGYVASPGSR…VNAFYQAIDV (163 aa)) form the Chitin-binding type-4 domain.

Requires Cu(2+) as cofactor.

Its subcellular location is the secreted. The enzyme catalyses [(1-&gt;4)-N-acetyl-beta-D-glucosaminyl]n+m + reduced acceptor + O2 = [(1-&gt;4)-N-acetyl-beta-D-glucosaminyl]m-1-(1-&gt;4)-2-(acetylamino)-2-deoxy-D-glucono-1,5-lactone + [(1-&gt;4)-N-acetyl-beta-D-glucosaminyl]n + acceptor + H2O.. It participates in glycan degradation; chitin degradation. In terms of biological role, involved in chitin degradation. Catalyzes the oxidative cleavage of glycosidic bonds in both alpha- and beta-chitin via a copper-dependent mechanism, leading to oxidized chitooligosaccharides with a dominance of even-numbered products. Acts synergistically with the chitinase EfChi18A, and combining the two enzymes leads to rapid and complete depolymerization of crystalline chitin, especially with beta-chitin as a substrate. Is likely involved in a chitin degradation pathway that allows E.faecalis V583 to grow on chitin as a carbon source. The sequence is that of Lytic chitin monooxygenase from Enterococcus faecalis (strain ATCC 700802 / V583).